The sequence spans 279 residues: Shikimate dehydrogenase (NADP(+)) (279 aa).

Shikimate-binding positions include Ser14 to Ser16 and Thr63. Lys67 functions as the Proton acceptor in the catalytic mechanism. Glu79 lines the NADP(+) pocket. Positions 88 and 103 each coordinate shikimate. NADP(+)-binding positions include Gly127 to Ala131, Asn151 to Lys156, and Met219. Tyr221 provides a ligand contact to shikimate. Gly242 serves as a coordination point for NADP(+).

The protein belongs to the shikimate dehydrogenase family. Homodimer.

The catalysed reaction is shikimate + NADP(+) = 3-dehydroshikimate + NADPH + H(+). Its pathway is metabolic intermediate biosynthesis; chorismate biosynthesis; chorismate from D-erythrose 4-phosphate and phosphoenolpyruvate: step 4/7. Involved in the biosynthesis of the chorismate, which leads to the biosynthesis of aromatic amino acids. Catalyzes the reversible NADPH linked reduction of 3-dehydroshikimate (DHSA) to yield shikimate (SA). In Caldicellulosiruptor saccharolyticus (strain ATCC 43494 / DSM 8903 / Tp8T 6331), this protein is Shikimate dehydrogenase (NADP(+)).